A 1059-amino-acid polypeptide reads, in one-letter code: Zinc finger protein 658 (1059 aa).

Residues 8–79 (VSFQDVTVEF…EDEFLNQRYP (72 aa)) enclose the KRAB domain. K178 is covalently cross-linked (Glycyl lysine isopeptide (Lys-Gly) (interchain with G-Cter in SUMO2)). The segment at 325-347 (FESNKCEENFSQSSAHIVHQKTQ) adopts a C2H2-type 1; degenerate zinc-finger fold. The C2H2-type 2; degenerate zinc-finger motif lies at 352–375 (FGEHNECTDALYQKLDFTAHQRIH). The segment at 381–406 (YLSDEHGKCRKSFYRKAHLIQHQRPH) adopts a C2H2-type 3; degenerate zinc-finger fold. Residues 412-434 (YQYEECAKSFCSSSHPIQHPGTY) form a C2H2-type 4; degenerate zinc finger. 14 consecutive C2H2-type zinc fingers follow at residues 440-462 (YECN…LRIH), 518-540 (YECI…QRIH), 546-568 (YECV…QRVH), 574-596 (YECN…QRIH), 602-624 (YECS…HRIH), 630-652 (YECN…QRIH), 658-680 (YECN…QRIH), 686-708 (YECS…QRIH), 714-736 (YECN…QNIH), 742-764 (YECS…RRIH), 770-792 (YECS…ERIH), 798-820 (YECN…QRIH), 826-848 (YECN…QRIH), and 854-876 (YECN…HRIH). Residues 882–904 (YECNDCGKTFSKTSHLRAHLRTR) form a C2H2-type 19; degenerate zinc finger. C2H2-type zinc fingers lie at residues 910-932 (YECS…QRVH), 938-960 (YECN…QRIH), 966-988 (YECN…QRIH), 994-1016 (YECN…QRIH), and 1022-1045 (YECD…TRMH).

This sequence belongs to the krueppel C2H2-type zinc-finger protein family.

The protein resides in the nucleus. Its function is as follows. Mediates transcriptional repression in response to zinc. Represses several genes, including SLC30A5, SLC30A10 and CBWD1, by binding to the zinc transcriptional regulatory element (ZTRE) (5'-C[AC]C[TAG]CC[TC]-N(0-50)-[GA]G[ATC]G[TG]G-3') found in the promoter region. May play a role in the control of ribosome biogenesis, regulating predominantly rRNA levels, as well as those of several ribosomal proteins, thus coordinating this highly zinc-demanding process with the available zinc supply. The protein is Zinc finger protein 658 (ZNF658) of Homo sapiens (Human).